The primary structure comprises 417 residues: Argininosuccinate synthase (417 aa).

ATP is bound at residue 8–16 (AYSGGLDTS). L-citrulline is bound at residue Tyr87. Position 117 (Gly117) interacts with ATP. 3 residues coordinate L-aspartate: Thr119, Asn123, and Asp124. Asn123 provides a ligand contact to L-citrulline. Arg127, Ser175, Glu259, and Tyr271 together coordinate L-citrulline.

It belongs to the argininosuccinate synthase family. Type 1 subfamily. In terms of assembly, homotetramer.

The protein localises to the cytoplasm. It carries out the reaction L-citrulline + L-aspartate + ATP = 2-(N(omega)-L-arginino)succinate + AMP + diphosphate + H(+). It functions in the pathway amino-acid biosynthesis; L-arginine biosynthesis; L-arginine from L-ornithine and carbamoyl phosphate: step 2/3. The chain is Argininosuccinate synthase from Clavibacter sepedonicus (Clavibacter michiganensis subsp. sepedonicus).